Reading from the N-terminus, the 340-residue chain is MQKIAVIGAGSWGSALAMVLADNGHDVRLVGRRQEQMDELNERHTNESYLPNIELPTTIRGYTGMEEALGGVEAIVLVVPTKAMRETVRKIVPYLQKAVPVIHASKGIEPATHKRISEMIAEEDASTNRISSITVLSGPSHAEEVALRQPTTVTVASADDEAAKYTQNLFMNQQFRVYTNPDLIGVEIGGALKNIIALACGVTNGLGYGDNTKAAIMTRGLAEISRLGTTMGAKPLTFSGLSGLGDLIVTCTSVHSRNWRAGRMIGEGLSMDEVLEKMGMVVEGIRTTQAAYELSEKLEIDMPVTKALYSVLFNGIDPYQAAEELMGRVKRHEVESLYRS.

Residues S11, W12, R32, R33, and K106 each coordinate NADPH. 3 residues coordinate sn-glycerol 3-phosphate: K106, G138, and S140. A142 is a binding site for NADPH. Sn-glycerol 3-phosphate is bound by residues K193, D246, S256, R257, and N258. K193 (proton acceptor) is an active-site residue. R257 lines the NADPH pocket. The NADPH site is built by V281 and E283.

Belongs to the NAD-dependent glycerol-3-phosphate dehydrogenase family.

The protein localises to the cytoplasm. It catalyses the reaction sn-glycerol 3-phosphate + NAD(+) = dihydroxyacetone phosphate + NADH + H(+). The catalysed reaction is sn-glycerol 3-phosphate + NADP(+) = dihydroxyacetone phosphate + NADPH + H(+). It participates in membrane lipid metabolism; glycerophospholipid metabolism. Catalyzes the reduction of the glycolytic intermediate dihydroxyacetone phosphate (DHAP) to sn-glycerol 3-phosphate (G3P), the key precursor for phospholipid synthesis. The protein is Glycerol-3-phosphate dehydrogenase [NAD(P)+] of Shouchella clausii (strain KSM-K16) (Alkalihalobacillus clausii).